A 262-amino-acid polypeptide reads, in one-letter code: Shikimate dehydrogenase (NADP(+)) (262 aa).

Residues 15 to 17 and Thr62 each bind shikimate; that span reads SRS. The active-site Proton acceptor is Lys66. Glu78 provides a ligand contact to NADP(+). Shikimate is bound by residues Asn87 and Asp102. NADP(+)-binding positions include 126–130, 150–155, and Met214; these read GAGGA and NRTLAR. Shikimate is bound at residue Tyr216. Gly236 contacts NADP(+).

Belongs to the shikimate dehydrogenase family. As to quaternary structure, homodimer.

It carries out the reaction shikimate + NADP(+) = 3-dehydroshikimate + NADPH + H(+). It functions in the pathway metabolic intermediate biosynthesis; chorismate biosynthesis; chorismate from D-erythrose 4-phosphate and phosphoenolpyruvate: step 4/7. In terms of biological role, involved in the biosynthesis of the chorismate, which leads to the biosynthesis of aromatic amino acids. Catalyzes the reversible NADPH linked reduction of 3-dehydroshikimate (DHSA) to yield shikimate (SA). This Acinetobacter baumannii (strain SDF) protein is Shikimate dehydrogenase (NADP(+)).